The sequence spans 1080 residues: Protein transport protein SEC24 C (1080 aa).

The segment covering methionine 1–proline 10 has biased composition (pro residues). Disordered regions lie at residues methionine 1–isoleucine 189, glycine 201–glutamine 220, and threonine 316–valine 367. Positions proline 12–leucine 43 are enriched in polar residues. Over residues arginine 45–glutamine 70 the composition is skewed to pro residues. Low complexity-rich tracts occupy residues glutamine 71–proline 84, proline 142–alanine 160, and glycine 178–isoleucine 189. Positions glycine 340–alanine 356 are enriched in polar residues. The Zn(2+) site is built by cysteine 430, cysteine 433, cysteine 452, and cysteine 455. Positions cysteine 430–cysteine 455 are zinc finger-like.

It belongs to the SEC23/SEC24 family. SEC24 subfamily. In terms of assembly, component of the coat protein complex II (COPII), composed of at least five proteins: the Sec23/24 complex, the Sec13/31 complex and Sar1. As to expression, mainly expressed at low levels in pollen, leaves, roots and stems.

The protein resides in the cytoplasmic vesicle. Its subcellular location is the COPII-coated vesicle membrane. The protein localises to the endoplasmic reticulum membrane. It localises to the golgi apparatus membrane. Component of the coat protein complex II (COPII), that covers ER-derived vesicles involved in transport from the endoplasmic reticulum to the Golgi apparatus. COPII is composed of at least five proteins: the SEC23/24 complex, the SEC13/31 complex, and the protein SAR1. Acts in the cytoplasm to promote the transport of secretory, plasma membrane, and vacuolar proteins from the endoplasmic reticulum to the Golgi complex. This is Protein transport protein SEC24 C from Arabidopsis thaliana (Mouse-ear cress).